The primary structure comprises 832 residues: DNA polymerase I, thermostable (832 aa).

In terms of domain architecture, 5'-3' exonuclease spans 175–260 (RPDQWADYRA…DLPLEVDFAK (86 aa)). Positions 410–832 (ERLFANLWGR…IGEDWLSAKE (423 aa)) are polymerase.

Belongs to the DNA polymerase type-A family.

The catalysed reaction is DNA(n) + a 2'-deoxyribonucleoside 5'-triphosphate = DNA(n+1) + diphosphate. In addition to polymerase activity, this DNA polymerase exhibits 5'-3' exonuclease activity. Unlikely to have 3'-5' exonuclease activity due to absence of a 3'-5' exonuclease domain. The polypeptide is DNA polymerase I, thermostable (polA) (Thermus aquaticus).